The following is a 616-amino-acid chain: Electron transfer flavoprotein-ubiquinone oxidoreductase, mitochondrial (616 aa).

A mitochondrion-targeting transit peptide spans 1–32 (MLVRLTKLSCPAYHWFHALKIKKCLPLCAPRC). 70–84 (VVIVGAGPAGLSAAI) is a binding site for FAD. N6-acetyllysine is present on Lys95. Residues 108-129 (IGAHTLSGACLDPAAFKELFPD) lie within the membrane without spanning it. 2 positions are modified to N6-acetyllysine: Lys131 and Lys222. Positions 304 and 305 each coordinate a ubiquinone. 2 positions are modified to N6-acetyllysine: Lys356 and Lys415. Residues 427 to 446 (TGLHVTEYEDNLKQSWVWKE) lie within the membrane without spanning it. Phosphoserine is present on Ser550. [4Fe-4S] cluster-binding residues include Cys560, Cys585, Cys588, and Cys591. Positions 576 to 605 (FRLQINAQNCVHCKTCDIKDPSQNINWVVP) constitute a 4Fe-4S ferredoxin-type domain.

It belongs to the ETF-QO/FixC family. As to quaternary structure, monomer. [4Fe-4S] cluster serves as cofactor. It depends on FAD as a cofactor. Post-translationally, acetylation of Lys-95 and Lys-222 is observed in liver mitochondria from fasted mice but not from fed mice.

It is found in the mitochondrion inner membrane. The enzyme catalyses a ubiquinone + reduced [electron-transfer flavoprotein] = a ubiquinol + oxidized [electron-transfer flavoprotein] + H(+). Functionally, accepts electrons from ETF and reduces ubiquinone. The polypeptide is Electron transfer flavoprotein-ubiquinone oxidoreductase, mitochondrial (Etfdh) (Mus musculus (Mouse)).